Here is a 325-residue protein sequence, read N- to C-terminus: tRNA dimethylallyltransferase (325 aa).

Glycine 12–threonine 19 lines the ATP pocket. Threonine 14 to threonine 19 contacts substrate. 3 interaction with substrate tRNA regions span residues aspartate 37 to leucine 40, glutamine 161 to arginine 165, and arginine 244 to arginine 249.

Belongs to the IPP transferase family. Monomer. It depends on Mg(2+) as a cofactor.

It carries out the reaction adenosine(37) in tRNA + dimethylallyl diphosphate = N(6)-dimethylallyladenosine(37) in tRNA + diphosphate. Its function is as follows. Catalyzes the transfer of a dimethylallyl group onto the adenine at position 37 in tRNAs that read codons beginning with uridine, leading to the formation of N6-(dimethylallyl)adenosine (i(6)A). In Chromobacterium violaceum (strain ATCC 12472 / DSM 30191 / JCM 1249 / CCUG 213 / NBRC 12614 / NCIMB 9131 / NCTC 9757 / MK), this protein is tRNA dimethylallyltransferase.